Consider the following 967-residue polypeptide: Phosphoenolpyruvate carboxylase 2 (967 aa).

A Phosphoserine modification is found at serine 13. Catalysis depends on residues histidine 174 and lysine 602.

It belongs to the PEPCase type 1 family. Homotetramer. Mg(2+) serves as cofactor.

It is found in the cytoplasm. The enzyme catalyses oxaloacetate + phosphate = phosphoenolpyruvate + hydrogencarbonate. It functions in the pathway photosynthesis; C3 acid pathway. Its activity is regulated as follows. By light-reversible phosphorylation. Its function is as follows. Through the carboxylation of phosphoenolpyruvate (PEP) it forms oxaloacetate, a four-carbon dicarboxylic acid source for the tricarboxylic acid cycle. This is Phosphoenolpyruvate carboxylase 2 (PEP4) from Zea mays (Maize).